Consider the following 441-residue polypeptide: Probable indole-3-acetic acid-amido synthetase GH3.9 (441 aa).

The protein belongs to the IAA-amido conjugating enzyme family. In terms of tissue distribution, expressed in etiolated seedlings and roots.

Functionally, may catalyze the synthesis of indole-3-acetic acid (IAA)-amino acid conjugates, providing a mechanism for the plant to cope with the presence of excess auxin. The chain is Probable indole-3-acetic acid-amido synthetase GH3.9 (GH3.9) from Oryza sativa subsp. japonica (Rice).